The sequence spans 349 residues: Small ribosomal subunit biogenesis GTPase RsgA (349 aa).

Residues 1–11 (MSKKKLSKGQQ) are compositionally biased toward basic residues. The disordered stretch occupies residues 1 to 29 (MSKKKLSKGQQRRVSANHQRRLKKTESKV). The CP-type G domain maps to 102 to 272 (HSVLTRPDYY…VIDSPGVREF (171 aa)). GTP-binding positions include 158 to 161 (NKID) and 212 to 220 (GQSGVGKSS). The Zn(2+) site is built by Cys296, Cys301, His303, and Cys309.

Belongs to the TRAFAC class YlqF/YawG GTPase family. RsgA subfamily. As to quaternary structure, monomer. Associates with 30S ribosomal subunit, binds 16S rRNA. Zn(2+) serves as cofactor.

The protein resides in the cytoplasm. In terms of biological role, one of several proteins that assist in the late maturation steps of the functional core of the 30S ribosomal subunit. Helps release RbfA from mature subunits. May play a role in the assembly of ribosomal proteins into the subunit. Circularly permuted GTPase that catalyzes slow GTP hydrolysis, GTPase activity is stimulated by the 30S ribosomal subunit. This chain is Small ribosomal subunit biogenesis GTPase RsgA, found in Pectobacterium carotovorum subsp. carotovorum (strain PC1).